We begin with the raw amino-acid sequence, 355 residues long: Probable NADPH-dependent quinone reductase tdiC (355 aa).

The protein belongs to the zinc-containing alcohol dehydrogenase family. It depends on NADPH as a cofactor.

The protein operates within secondary metabolite biosynthesis. In terms of biological role, probable NADPH-dependent quinone reductase; part of the gene cluster that mediates the biosynthesis of terrequinone A, an antitumor agent. The first step in the biosynthetic pathway for terrequinone A is formation of indole pyruvic acid (IPA) from L-tryptophan by the aminotransferase tdiD. The nonribosomal peptide synthase tdiA then immediately converts unstable IPA to didemethylasterriquinone D (DDAQ D), via condensation of 2 IPA molecules. The symmetric connectivity of the 2 IPA molecules is thought to arise by head-to-tail dual Claisen condensations facilitated by the TE domain. TdiB then catalyzes reverse prenylation by transferring dimethylallyl diphosphate to carbon atom 2' of DDAQ D, to yield asterriquinone C-1. Finally, tdiC and tdiE enzymes robustly convert asterriquinone C-1 to terrequinone A via a transformation involving regular prenylation at carbon atom 5, which requires elimination of the hydroxy group on C-5. This chain is Probable NADPH-dependent quinone reductase tdiC, found in Emericella nidulans (strain FGSC A4 / ATCC 38163 / CBS 112.46 / NRRL 194 / M139) (Aspergillus nidulans).